The chain runs to 482 residues: Replication factor C large subunit (482 aa).

46-53 (GPPGSGKT) is a binding site for ATP. A disordered region spans residues 420 to 482 (EKETPKKKKK…KKQATLDSFF (63 aa)). Residues 442–476 (KISEPPKEPLKEVIEETVEKTDKKEKEKKDPKKQA) are compositionally biased toward basic and acidic residues.

Belongs to the activator 1 small subunits family. RfcL subfamily. Heteromultimer composed of small subunits (RfcS) and large subunits (RfcL).

Its function is as follows. Part of the RFC clamp loader complex which loads the PCNA sliding clamp onto DNA. The polypeptide is Replication factor C large subunit (Methanococcus maripaludis (strain C7 / ATCC BAA-1331)).